The chain runs to 197 residues: TLE family member 5 (197 aa).

A CCN domain region spans residues 166–197 (LSALGSQTHLSKEDKNGHDGDTHQEDDGEKSD). The disordered stretch occupies residues 170–197 (GSQTHLSKEDKNGHDGDTHQEDDGEKSD). Residues 175–197 (LSKEDKNGHDGDTHQEDDGEKSD) are compositionally biased toward basic and acidic residues. The residue at position 196 (serine 196) is a Phosphoserine.

The protein belongs to the WD repeat Groucho/TLE family. Homooligomer and heterooligomer with other family members. Binds TCF7 and the NF-kappa-B subunit RELA. Interacts with PHF12. Interacts (via Q domain) with SIX3. Interacts with SIX6. Ubiquitinated by XIAP/BIRC4. In terms of tissue distribution, ubiquitously expressed in developing embryos by midgestation, a wide expression is conserved in adult. In mouse, abundantly expressed in muscle, heart and brain.

The protein resides in the nucleus. In terms of biological role, transcriptional corepressor. Acts as a dominant repressor towards other family members. Inhibits NF-kappa-B-regulated gene expression. May be required for the initiation and maintenance of the differentiated state. Essential for the transcriptional repressor activity of SIX3 during retina and lens development. This chain is TLE family member 5, found in Mus musculus (Mouse).